A 23-amino-acid chain; its full sequence is Coenzyme PQQ synthesis protein A (23 aa).

Positions 15-19 (EVTLY) form a cross-link, pyrroloquinoline quinone (Glu-Tyr).

Belongs to the PqqA family.

The protein operates within cofactor biosynthesis; pyrroloquinoline quinone biosynthesis. Functionally, required for coenzyme pyrroloquinoline quinone (PQQ) biosynthesis. PQQ is probably formed by cross-linking a specific glutamate to a specific tyrosine residue and excising these residues from the peptide. This Colwellia psychrerythraea (strain 34H / ATCC BAA-681) (Vibrio psychroerythus) protein is Coenzyme PQQ synthesis protein A.